The sequence spans 812 residues: MRLAAESSLVFFVSHFYFERFFSFVMVAYTLDTLFASDIDSATLFYSEGCGPIRLVALSAQMRRLVRLGPIRVAKACVEVRPMAPTKEFFEEGRQLQHIEAAGVGDFPDSERSGDTFVNPFTGRLTPTWGRVAKELFSLGFEHSIVNPFRLVWNPTKAALVSDAALQPFRTSTVTWRRNLAALLSRRDAADAVGEEIHRLYNEITSAYLPPKLDTMHDPRLSTMTMTPDQQNVIRCALRGYSMFIGGSAGTGKTVLLKAIHRKLTEMGLRVAMTATTGVASVQLGGCTFHLAFGVPIKGEEGTRKRWDSNAFRAVDVVIIDEVSLLDAELFETFEEEARMARLQQSPFGGLQVIACGDFLQLAMMDVSIGGPCYQSHAFRHLIPVCLVTSMRQAQGDPFCELLGQLRVGKFDKKAFKALDRPVSGDANNVTYIFPRRCDAQRLNDEKLCELRSEEMIFAPQRGPLQLVGNFTPAGLVDWGRKKDFPKREKIITVLSEEIKRITGVDIVDHNIVVMPAGGEKNAVLIRLRHSEDRNVLICKNGGSKEHGASNEGGAEESHWRAILEATAGRLKGKLHQIYNQDPHNFIPPSVSLMLADASLHPNAELISPLRLKLGCRVMINRNLSRTVSNGSVGIVEAFAAPNLDLFPRRHETSPKAFHTWSLERNGFQRLPIVRLLSGEVVQLPPLSVMIGGTPSTYFYGHELFVLPLQLGYGFTVHKVQGLTLEGTVVLDCKKFFECPHLVYVACSRVRSMDQLIVRNVRSDMIIVRQSALDFTNALRDASVMSSLDPPDGCTRASWVRRLSPLLVGLTD.

247–254 (GSAGTGKT) lines the ATP pocket. A DNA-binding region spans residues 741 to 761 (HLVYVACSRVRSMDQLIVRNV).

This sequence belongs to the helicase family. PIF1 subfamily. As to quaternary structure, monomer. It depends on Mg(2+) as a cofactor.

Its subcellular location is the cytoplasm. The catalysed reaction is Couples ATP hydrolysis with the unwinding of duplex DNA at the replication fork by translocating in the 5'-3' direction. This creates two antiparallel DNA single strands (ssDNA). The leading ssDNA polymer is the template for DNA polymerase III holoenzyme which synthesizes a continuous strand.. The enzyme catalyses ATP + H2O = ADP + phosphate + H(+). In terms of biological role, DNA-dependent ATPase and 5'-3' DNA helicase required for the maintenance of genome stability. The sequence is that of ATP-dependent DNA helicase PIF3 from Trypanosoma brucei brucei (strain 927/4 GUTat10.1).